The sequence spans 171 residues: Co-chaperone protein HscB homolog (171 aa).

Residues 2-74 (NHFELFGLPN…VTRAEYILSE (73 aa)) enclose the J domain.

The protein belongs to the HscB family. In terms of assembly, interacts with HscA and stimulates its ATPase activity.

Co-chaperone involved in the maturation of iron-sulfur cluster-containing proteins. Seems to help targeting proteins to be folded toward HscA. The protein is Co-chaperone protein HscB homolog of Aliivibrio salmonicida (strain LFI1238) (Vibrio salmonicida (strain LFI1238)).